The chain runs to 283 residues: Lysozyme-like protein 7 (283 aa).

The signal sequence occupies residues 1–18 (MAHKSIVIFSVLAVLCHS). The 221-residue stretch at 53 to 273 (YAYALDIYVQ…AVEEDGKIYA (221 aa)) folds into the Ch-type lysozyme domain.

This sequence belongs to the glycosyl hydrolase 25 family. Expressed in intestine. Expressed in rectal gland cells and head neurons.

In terms of biological role, plays a role in resistance to Gram-positive bacteria B.thuringiensis and M.nematophilum and Gram-negative bacteria S.boydii or S.flexneri infection and to fungus C.neoformans infection. Plays a role in susceptibility to Gram-negative bacterium S.typhimurium infection. The sequence is that of Lysozyme-like protein 7 from Caenorhabditis elegans.